A 428-amino-acid chain; its full sequence is UPF0597 protein BF3560 (428 aa).

The protein belongs to the UPF0597 family.

The chain is UPF0597 protein BF3560 from Bacteroides fragilis (strain ATCC 25285 / DSM 2151 / CCUG 4856 / JCM 11019 / LMG 10263 / NCTC 9343 / Onslow / VPI 2553 / EN-2).